The sequence spans 546 residues: Tyrosine-protein kinase yes (546 aa).

A compositionally biased stretch (basic and acidic residues) spans 1-18 (MGCVKSKEDKGPTQKYRP). The tract at residues 1–58 (MGCVKSKEDKGPTQKYRPDPTNPTPGSHMGLYGPDPTQMGQSPALKGPTNNYNSRSSG) is disordered. Gly-2 is lipidated: N-myristoyl glycine. Cys-3 carries the S-palmitoyl cysteine; in membrane form lipid modification. The span at 48–58 (PTNNYNSRSSG) shows a compositional bias: polar residues. Residues 94-155 (GGVTFFVALY…PSNYVAPADS (62 aa)) enclose the SH3 domain. The region spanning 161-258 (WYFGKMGRKD…GLCYRLTTVC (98 aa)) is the SH2 domain. One can recognise a Protein kinase domain in the interval 280 to 533 (LRLELKLGQG…YIQSFLEDYF (254 aa)). ATP-binding positions include 286 to 294 (LGQGCFGEV) and Lys-308. Residue Asp-399 is the Proton acceptor of the active site. Position 429 is a phosphotyrosine; by autocatalysis (Tyr-429). Tyr-540 is modified (phosphotyrosine; by CSK).

It belongs to the protein kinase superfamily. Tyr protein kinase family. SRC subfamily. In terms of processing, autophosphorylation at Tyr-429 maintains enzyme activity. Palmitoylation at Cys-3 promotes membrane localization. Widely expressed.

It localises to the cell membrane. Its subcellular location is the cytoplasm. The protein resides in the cytoskeleton. The protein localises to the microtubule organizing center. It is found in the centrosome. It localises to the cytosol. Its subcellular location is the cell junction. The enzyme catalyses L-tyrosyl-[protein] + ATP = O-phospho-L-tyrosyl-[protein] + ADP + H(+). Non-receptor protein tyrosine kinase that is involved in the regulation of cell growth and survival, apoptosis, cell-cell adhesion, cytoskeleton remodeling, differentiation, G2/M progression and cytokinesis. Required for convergent extension cell movements during gastrulation, acting with fyna via rhoa. May be required for epiboly to occur, possibly through its effects in calcium signaling. During embryonic development, phosphorylates ptk2.1/fak. The polypeptide is Tyrosine-protein kinase yes (yes1) (Danio rerio (Zebrafish)).